The primary structure comprises 457 residues: tRNA-2-methylthio-N(6)-dimethylallyladenosine synthase (457 aa).

The region spanning 3–120 (KKVYVKTFGC…LPQMIDKRRE (118 aa)) is the MTTase N-terminal domain. Residues cysteine 12, cysteine 49, cysteine 83, cysteine 157, cysteine 161, and cysteine 164 each contribute to the [4Fe-4S] cluster site. One can recognise a Radical SAM core domain in the interval 143–377 (RVDGPSAFVS…QATIEENVQR (235 aa)). The region spanning 380-447 (DSMVGKIERI…PHSLRGELVL (68 aa)) is the TRAM domain.

The protein belongs to the methylthiotransferase family. MiaB subfamily. Monomer. It depends on [4Fe-4S] cluster as a cofactor.

It is found in the cytoplasm. The catalysed reaction is N(6)-dimethylallyladenosine(37) in tRNA + (sulfur carrier)-SH + AH2 + 2 S-adenosyl-L-methionine = 2-methylsulfanyl-N(6)-dimethylallyladenosine(37) in tRNA + (sulfur carrier)-H + 5'-deoxyadenosine + L-methionine + A + S-adenosyl-L-homocysteine + 2 H(+). Its function is as follows. Catalyzes the methylthiolation of N6-(dimethylallyl)adenosine (i(6)A), leading to the formation of 2-methylthio-N6-(dimethylallyl)adenosine (ms(2)i(6)A) at position 37 in tRNAs that read codons beginning with uridine. In Paraburkholderia xenovorans (strain LB400), this protein is tRNA-2-methylthio-N(6)-dimethylallyladenosine synthase.